A 1029-amino-acid chain; its full sequence is MSAAKENPCRKFQANIFNKSKCQNCFKPRESHLLNDEDLTQAKPIYGGWLLLAPDGTDFDNPVHRSRKWQRRFFILYEHGLLRYALDEMPTTLPQGTINMNQCTDVVDGEARTGQKFSLCILTPDKEHFIRAETKEIISGWLEMLMVYPRTNKQNQKKKRKVEPPTPQEPGPAKMAVTSSSGGSSGSSSSSSSSSIPSAEKVPTTKSTLWQEEMRAKDQPDGTSLSPVQSPSQSQPPAACTPRETGLDSKEDENILSGDRVDGGRKVRVESGYFSLEKAKQDLRAEEQLPPLLSPPSPSTPHSRRSQVIEKFEALDIEKAEHMETNMLILTTPSSDTRQGRSERRAIPRKRDFASETPTAPLSDACPLSPHRRAKSLDRRSTESSMTPDLLNFKKGWLTKQYEDGQWKKHWFVLADQSLRYYRDSVAEEAADLDGEINLSTCYDVTEYPVQRNYGFQIHTKEGEFTLSAMTSGIRRNWIQTIMKHVLPTSAPDVTSSLPEGKNKSTSFDTCLRPSEKQEAEPGEPDPEQKKSRARERRREGRSKTFDWAEFRPIQQALAQERASTVGSSDSGDPGCLEAEPGELERERARRREERRKRFGMLDTNDGPGMEDTALRMDIDRSPGLLGTPDLKTQNVHVEIEQRWHQVETTPLREEKQVPIAPLHLSLEDRSERLSTHELTSLLEKELEQSQKEASDLLEQNRLLQDQLRVALGREQSAREGYVLQATCERGFAAMEETHQKKIEDLQRQHQRELEKLREEKDRLLAEETAATISAIEAMKNAHREEMERELEKSQRSQISSINSDIEALRRQYLEELQSVQRELEVLSEQYSQKCLENAHLAQALEAERQALRQCQRENQELNAHNQELNNRLAAEITRLRTLLTREGGGESTGLPLTQGKDAYELEVLLRVKESEIQYLKQEISSLKDELQTALRDKKYASDKYKDIYTELSIAKAKADCDISRLKEQLKAATEALGEKSPEGTTVSGYDIMKSKSNPDFLKKDRSCVTRQLRNIRSKSVIEQVSWDN.

The tract at residues 1–387 is interaction with F-actin; it reads MSAAKENPCR…DRRSTESSMT (387 aa). A PH 1 domain is found at 43–150; it reads KPIYGGWLLL…WLEMLMVYPR (108 aa). Residues 152–267 form a disordered region; it reads NKQNQKKKRK…GDRVDGGRKV (116 aa). Residues 179–195 are compositionally biased toward low complexity; sequence SSSGGSSGSSSSSSSSS. Residues Ser-198, Ser-224, Ser-226, Ser-230, and Ser-232 each carry the phosphoserine modification. The segment covering 226–237 has biased composition (low complexity); sequence SPVQSPSQSQPP. Over residues 245–267 the composition is skewed to basic and acidic residues; the sequence is TGLDSKEDENILSGDRVDGGRKV. Phosphoserine occurs at positions 271, 275, 294, and 297. Disordered stretches follow at residues 279-306 and 333-383; these read AKQDLRAEEQLPPLLSPPSPSTPHSRRS and PSSD…RSTE. Thr-300 is subject to Phosphothreonine. Residues 338 to 354 are compositionally biased toward basic and acidic residues; sequence RQGRSERRAIPRKRDFA. Ser-369 is modified (phosphoserine). Residues 391–487 form the PH 2 domain; that stretch reads LNFKKGWLTK…WIQTIMKHVL (97 aa). Residues 490–614 are disordered; it reads SAPDVTSSLP…NDGPGMEDTA (125 aa). Residues 492 to 509 show a composition bias toward polar residues; that stretch reads PDVTSSLPEGKNKSTSFD. At Ser-497 the chain carries Phosphoserine. Basic and acidic residues predominate over residues 527 to 550; that stretch reads PEQKKSRARERRREGRSKTFDWAE. Positions 550–828 are interaction with RHOA; the sequence is EFRPIQQALA…SVQRELEVLS (279 aa). Residues 562 to 571 show a composition bias toward polar residues; the sequence is RASTVGSSDS. Residues 583–592 are compositionally biased toward basic and acidic residues; the sequence is ELERERARRR. Position 622 is a phosphoserine (Ser-622). At Thr-650 the chain carries Phosphothreonine. The stretch at 675-979 forms a coiled coil; sequence STHELTSLLE…LKAATEALGE (305 aa). Ser-804 is modified (phosphoserine). The tract at residues 828–883 is interaction with PPP1R12A; it reads SEQYSQKCLENAHLAQALEAERQALRQCQRENQELNAHNQELNNRLAAEITRLRTL. Phosphoserine occurs at positions 981, 997, 1018, and 1020.

In terms of assembly, binds RHOA, PPP1R12A/MBS and PPP1R12C/MBS85 through adjacent coiled coil domains. Interacts with MYZAP. Binds F-actin through its N-terminus.

Its subcellular location is the cytoplasm. It localises to the cytoskeleton. Functionally, targets myosin phosphatase to the actin cytoskeleton. Required for the regulation of the actin cytoskeleton by RhoA and ROCK1. Depletion leads to an increased number of stress fibers in smooth muscle cells through stabilization of actin fibers by phosphorylated myosin. Overexpression of MRIP as well as its F-actin-binding region leads to disassembly of stress fibers in neuronal cells. The protein is Myosin phosphatase Rho-interacting protein (Mprip) of Rattus norvegicus (Rat).